The chain runs to 296 residues: 1,2-beta-oligomannan phosphorylase (296 aa).

It belongs to the glycosyl hydrolase 130 family. Homodimer.

The catalysed reaction is [(1-&gt;2)-beta-D-mannosyl](n) + phosphate = [(1-&gt;2)-beta-D-mannosyl](n-1) + alpha-D-mannose 1-phosphate. It functions in the pathway nucleotide-sugar biosynthesis; GDP-alpha-D-mannose biosynthesis. In terms of biological role, probably involved in a salvage pathway for GDP-D-mannose biosynthesis. Catalyzes the reversible phosphorolysis of 1,2-beta-oligomannan. In phosphorolytic reactions, prefers 1,2-beta-oligomannan with a degree of polymerization (DP) of 3, 4 and 5. Produces alpha-D-mannose 1-phosphate, which is the precursor of GDP-D-mannose. In Thermoanaerobacter sp. (strain X514), this protein is 1,2-beta-oligomannan phosphorylase.